The chain runs to 137 residues: Putative transcriptional regulatory protein MJ0173 (137 aa).

The protein belongs to the Tfx family.

Putative transcriptional regulator. The polypeptide is Putative transcriptional regulatory protein MJ0173 (Methanocaldococcus jannaschii (strain ATCC 43067 / DSM 2661 / JAL-1 / JCM 10045 / NBRC 100440) (Methanococcus jannaschii)).